A 284-amino-acid polypeptide reads, in one-letter code: ATP phosphoribosyltransferase (284 aa).

The protein belongs to the ATP phosphoribosyltransferase family. Long subfamily. The cofactor is Mg(2+).

Its subcellular location is the cytoplasm. The enzyme catalyses 1-(5-phospho-beta-D-ribosyl)-ATP + diphosphate = 5-phospho-alpha-D-ribose 1-diphosphate + ATP. It functions in the pathway amino-acid biosynthesis; L-histidine biosynthesis; L-histidine from 5-phospho-alpha-D-ribose 1-diphosphate: step 1/9. Its activity is regulated as follows. Feedback inhibited by histidine. In terms of biological role, catalyzes the condensation of ATP and 5-phosphoribose 1-diphosphate to form N'-(5'-phosphoribosyl)-ATP (PR-ATP). Has a crucial role in the pathway because the rate of histidine biosynthesis seems to be controlled primarily by regulation of HisG enzymatic activity. The polypeptide is ATP phosphoribosyltransferase (Pseudarthrobacter chlorophenolicus (strain ATCC 700700 / DSM 12829 / CIP 107037 / JCM 12360 / KCTC 9906 / NCIMB 13794 / A6) (Arthrobacter chlorophenolicus)).